A 412-amino-acid polypeptide reads, in one-letter code: 43 kDa receptor-associated protein of the synapse (412 aa).

The N-myristoyl glycine moiety is linked to residue G2. TPR repeat units follow at residues 6–39 (TKQQIEKGLHLYQSNQTEKALQVWMRVLEKSADP), 83–116 (TEGYLNLARSNEKLCEFQKTISYCKTCLNMQGTT), 123–156 (GQVSLSMGNAFLGLSIFQKALECFEKALRYAHNN), 163–196 (CRVCCSLGNFYAQIKDYEKALFFPCKAAELVNDY), 206–239 (AMSQYHMAVAYRKLGRLADAMDCCEESMKIALQH), 246–279 (ALCLLCFADIHLSRRDVQTAFPRYDSAMSIMTEI), and 286–319 (IQVLLGVAKCWMIQKELDKALESIEKAQELAEGL). Residue Y196 is modified to Phosphotyrosine. The segment at 363–403 (CGMCGESIGEKNNQLQALPCSHFFHLKCLQTNGTRGCPNCR) adopts an RING-type zinc-finger fold.

Belongs to the RAPsyn family. As to expression, expressed in muscle fibers and in neurons.

Its subcellular location is the cell membrane. It localises to the postsynaptic cell membrane. It is found in the cytoplasm. The protein localises to the cytoskeleton. Its function is as follows. Postsynaptic protein required for clustering of nicotinic acetylcholine receptors (nAChRs) at the neuromuscular junction. It may link the receptor to the underlying postsynaptic cytoskeleton, possibly by direct association with actin or spectrin. This Gallus gallus (Chicken) protein is 43 kDa receptor-associated protein of the synapse (RAPSN).